We begin with the raw amino-acid sequence, 426 residues long: Pyrophosphate--fructose 6-phosphate 1-phosphotransferase 1 (426 aa).

Gly15 is a binding site for diphosphate. Mg(2+) is bound at residue Asp114. Substrate is bound by residues 140–142, 186–188, Glu247, and 308–311; these read TID, MGR, and YELR. The active-site Proton acceptor is Asp142.

It belongs to the phosphofructokinase type A (PFKA) family. PPi-dependent PFK group II subfamily. Clade 'Short' sub-subfamily. Homotetramer. It depends on Mg(2+) as a cofactor.

It localises to the cytoplasm. It catalyses the reaction beta-D-fructose 6-phosphate + diphosphate = beta-D-fructose 1,6-bisphosphate + phosphate + H(+). The protein operates within carbohydrate degradation; glycolysis; D-glyceraldehyde 3-phosphate and glycerone phosphate from D-glucose: step 3/4. Non-allosteric. Functionally, catalyzes the phosphorylation of D-fructose 6-phosphate, the first committing step of glycolysis. Uses inorganic phosphate (PPi) as phosphoryl donor instead of ATP like common ATP-dependent phosphofructokinases (ATP-PFKs), which renders the reaction reversible, and can thus function both in glycolysis and gluconeogenesis. Consistently, PPi-PFK can replace the enzymes of both the forward (ATP-PFK) and reverse (fructose-bisphosphatase (FBPase)) reactions. This is Pyrophosphate--fructose 6-phosphate 1-phosphotransferase 1 (Pfk1) from Trichomonas vaginalis (strain ATCC PRA-98 / G3).